The following is a 108-amino-acid chain: Translation initiation factor 1A (108 aa).

The S1-like domain occupies 11-85 (PSKDVPKPEE…TKADIVYRYM (75 aa)).

Belongs to the eIF-1A family.

Its function is as follows. Seems to be required for maximal rate of protein biosynthesis. Enhances ribosome dissociation into subunits and stabilizes the binding of the initiator Met-tRNA(I) to 40 S ribosomal subunits. The protein is Translation initiation factor 1A (eIF1A) of Metallosphaera sedula (strain ATCC 51363 / DSM 5348 / JCM 9185 / NBRC 15509 / TH2).